An 87-amino-acid polypeptide reads, in one-letter code: Large ribosomal subunit protein eL31 (87 aa).

It belongs to the eukaryotic ribosomal protein eL31 family.

The protein is Large ribosomal subunit protein eL31 of Methanosphaerula palustris (strain ATCC BAA-1556 / DSM 19958 / E1-9c).